The chain runs to 471 residues: Glutamate--tRNA ligase (471 aa).

Residues 9-19 (PSPTGYLHVGG) carry the 'HIGH' region motif. The Zn(2+) site is built by Cys98, Cys100, Cys125, and His127. The short motif at 237–241 (KLSKR) is the 'KMSKS' region element. ATP is bound at residue Lys240.

It belongs to the class-I aminoacyl-tRNA synthetase family. Glutamate--tRNA ligase type 1 subfamily. As to quaternary structure, monomer. It depends on Zn(2+) as a cofactor.

It localises to the cytoplasm. It catalyses the reaction tRNA(Glu) + L-glutamate + ATP = L-glutamyl-tRNA(Glu) + AMP + diphosphate. Catalyzes the attachment of glutamate to tRNA(Glu) in a two-step reaction: glutamate is first activated by ATP to form Glu-AMP and then transferred to the acceptor end of tRNA(Glu). This Shigella boydii serotype 4 (strain Sb227) protein is Glutamate--tRNA ligase.